The following is a 321-amino-acid chain: Large ribosomal subunit protein uL10 (321 aa).

The segment at 284–321 (SAGTAPTGGGAAAAAVEEKKEEPEEESDDDIGFSLFDD) is disordered. The span at 306 to 321 (PEEESDDDIGFSLFDD) shows a compositional bias: acidic residues.

Belongs to the universal ribosomal protein uL10 family. In terms of assembly, P0 forms a pentameric complex by interaction with dimers of P1 and P2. Post-translationally, phosphorylated.

Functionally, ribosomal protein P0 is the functional equivalent of E.coli protein L10. The protein is Large ribosomal subunit protein uL10 of Oxybasis rubra (Red goosefoot).